Reading from the N-terminus, the 91-residue chain is Small ribosomal subunit protein uS19 (91 aa).

Belongs to the universal ribosomal protein uS19 family.

Its function is as follows. Protein S19 forms a complex with S13 that binds strongly to the 16S ribosomal RNA. The sequence is that of Small ribosomal subunit protein uS19 from Bordetella pertussis (strain Tohama I / ATCC BAA-589 / NCTC 13251).